The sequence spans 171 residues: Adenine phosphoribosyltransferase (171 aa).

It belongs to the purine/pyrimidine phosphoribosyltransferase family. In terms of assembly, homodimer.

The protein resides in the cytoplasm. It carries out the reaction AMP + diphosphate = 5-phospho-alpha-D-ribose 1-diphosphate + adenine. Its pathway is purine metabolism; AMP biosynthesis via salvage pathway; AMP from adenine: step 1/1. Catalyzes a salvage reaction resulting in the formation of AMP, that is energically less costly than de novo synthesis. The protein is Adenine phosphoribosyltransferase of Rhodospirillum centenum (strain ATCC 51521 / SW).